The chain runs to 86 residues: Beta-mammal/insect toxin To1 (86 aa).

The N-terminal stretch at 1–20 is a signal peptide; sequence MTRFVLFISCFFLIDMIVEC. Residues 22–84 enclose the LCN-type CS-alpha/beta domain; the sequence is KEGYLVGNDG…TWSSATNKCK (63 aa). Intrachain disulfides connect cysteine 32/cysteine 83, cysteine 36/cysteine 58, cysteine 44/cysteine 64, and cysteine 48/cysteine 66. Lysine 84 bears the Lysine amide mark.

This sequence belongs to the long (4 C-C) scorpion toxin superfamily. Sodium channel inhibitor family. Beta subfamily. Expressed by the venom gland.

Its subcellular location is the secreted. Its function is as follows. Beta toxin that show multiple effects. It enhances the open probability at more negative potentials of human Nav1.3/SCN3A and Nav1.6/SCN8A, of the insect channel BgNaV1 and of arachnid VdNaV1 channel. It promotes an important shift in slow inactivation processes as a function of the prepulse voltage in human Nav1.3/SCN3A and Nav1.6/SCN8A and a small shift in Nav1.1/SCN1A, Nav1.2/SCN2A and Nav1.4/SCN4A. Finally, it reduces the peak of sodium currents in Nav1.3/SCN3A (80% inhibition at 70 nM of toxin), Nav1.6/SCN8A (55.3%), Nav1.1/SCN1A (53.3%), Nav1.5/SCN5A (46.7%), Nav1.2/SCN2A (42.7%) and Nav1.4/SCN4A (20%) voltage-gated sodium channels. It has also been shown to affect the sodium current permeability of rat cerebellum granular cells in a partially reversible manner. In vivo, an intraperitoneal injection (20 ug) into mice produces excitability, respiratory problems, convulsions and death, within the first 30 minutes after injection. The sequence is that of Beta-mammal/insect toxin To1 from Tityus obscurus (Amazonian scorpion).